A 240-amino-acid chain; its full sequence is Uridylate kinase (240 aa).

12–15 is an ATP binding site; that stretch reads KLSG. Position 54 (G54) interacts with UMP. 2 residues coordinate ATP: G55 and R59. Residues D74 and 135 to 142 each bind UMP; that span reads TGNPFFTT. ATP-binding residues include T162, Y168, and D171.

It belongs to the UMP kinase family. As to quaternary structure, homohexamer.

The protein resides in the cytoplasm. The enzyme catalyses UMP + ATP = UDP + ADP. The protein operates within pyrimidine metabolism; CTP biosynthesis via de novo pathway; UDP from UMP (UMPK route): step 1/1. With respect to regulation, inhibited by UTP. Catalyzes the reversible phosphorylation of UMP to UDP. This is Uridylate kinase from Xanthomonas axonopodis pv. citri (strain 306).